Reading from the N-terminus, the 106-residue chain is MNDSEFHQLADQLMLYIEETLDSFTGDSDIDYETNGGVMTLTFENGSKIVINRQEPLHQVWLATKAGGYHFNYRDGHWYCSRSGEEFLAKLSEAASAQAGENVSFG.

This sequence belongs to the frataxin family.

Functionally, involved in iron-sulfur (Fe-S) cluster assembly. May act as a regulator of Fe-S biogenesis. The sequence is that of Iron-sulfur cluster assembly protein CyaY from Yersinia pestis bv. Antiqua (strain Antiqua).